We begin with the raw amino-acid sequence, 402 residues long: CD2 homolog (402 aa).

The first 16 residues, 1-16 (MIIIVIFLMCLKIVLN), serve as a signal peptide directing secretion. Topologically, residues 17 to 204 (NIIIWSTLNQ…ILKYQNYLST (188 aa)) are extracellular. N-linked (GlcNAc...) asparagine; by host glycosylation is found at Asn-25, Asn-37, Asn-52, Asn-55, Asn-72, Asn-77, Asn-81, Asn-89, Asn-95, Asn-108, Asn-125, Asn-137, Asn-148, Asn-153, Asn-169, Asn-177, Asn-184, and Asn-190. 2 disulfides stabilise this stretch: Cys-126/Cys-191 and Cys-133/Cys-174. Residues 205 to 225 (LFYIIIFIVSGLIIGIFISII) form a helical membrane-spanning segment. The Cytoplasmic portion of the chain corresponds to 226–402 (SVLSIRRKRK…ISLIHVDRII (177 aa)). The disordered stretch occupies residues 238-276 (VEEIESPPPSESNEEDISHDDTTSIHEPSPREPLLPKPY). The span at 256–267 (HDDTTSIHEPSP) shows a compositional bias: basic and acidic residues. A run of 11 repeats spans residues 302–307 (KPCPPP), 308–313 (KPCPPP), 314–319 (KPCPPP), 320–325 (KPCPPP), 326–331 (KPCSPP), 332–337 (KPCRPP), 338–343 (KPCPPP), 344–349 (KPCPPP), 350–355 (KPCPPP), 356–361 (KPCPPS), and 362–367 (KPCPSP). An 11 X 6 AA tandem repeats of K-P-C-[PRS]-[P]-[PS] region spans residues 302–367 (KPCPPPKPCP…CPPSKPCPSP (66 aa)). Residues 319–386 (PKPCPPPKPC…PSIPLLPNIP (68 aa)) show a composition bias toward pro residues. The interval 319-388 (PKPCPPPKPC…IPLLPNIPPL (70 aa)) is disordered.

The protein belongs to the asfivirus CD2 homolog protein family. In terms of assembly, both glycosylated and nonglycosylated forms interact (via C-terminus) with the host AP-1 complex. Post-translationally, cleaved into two fragments of 63 kDa and 26 kDa containing respectively the glycosylated N-terminus and the nonglycosylated C-terminus. A full-length 89-kDa glycosylated form also exists.

The protein resides in the host cell membrane. The protein localises to the virion membrane. It is found in the host Golgi apparatus. May play an immunosuppressive role by inhibiting lymphocyte proliferation and subsequently facilitating viral replication and generalization of infection. Responsible for viral hemadsorption, which may help viral spread. Increases virus replication in the tick vector at the step of virus uptake or replication in the tick gut. May play a role in the host Golgi reorganization to yield viral factories. May play a role in host cell penetration. This chain is CD2 homolog, found in Ornithodoros (relapsing fever ticks).